The following is a 300-amino-acid chain: MRFLAFLLCLVPLALCIIEPRGIDGPTSHEAPTDLPIDWHILSQAAGMAHEPYCLFGDIGDRVGDAEVLWSKGHGVVIQRVKIFHSKSLGVTVSFEGTTASLLSILHDVNAALIDPPKEVAPAYCEGVKLFAGFSNAYMELRDEVYEQIVKFQKQFNDKRVTTTGHSLGAAMAVLAAMDLNKRLDDGIYRSFAFGMPRTGNGAFANDVDKKIGGRFFYIVNGRDWVPRVLPRELGFQHPSGQIWINPPSTTHWKYYPGQENHYGANSEDPILTFDDHHGIYFHTGLGHGPGKCPASVGTA.

Positions 1–16 are cleaved as a signal peptide; that stretch reads MRFLAFLLCLVPLALC. Residues cysteine 54 and cysteine 293 are joined by a disulfide bond. The Nucleophile role is filled by serine 167. Residue aspartate 224 is part of the active site.

Belongs to the AB hydrolase superfamily. Lipase family. Class 3 subfamily.

The protein resides in the secreted. It catalyses the reaction a monoacylglycerol + H2O = glycerol + a fatty acid + H(+). It carries out the reaction a diacylglycerol + H2O = a monoacylglycerol + a fatty acid + H(+). Functionally, secreted lipase involved in Dandruff and seborrheic dermatitis (D/SD) probably via lipase-mediated breakdown of sebaceous lipids and release of irritating free fatty acids. Shows activity against monoglyceride and diglyceride substrates. Due to an absence of fatty acid synthase genes in Malassezia species, secretory lipases are essential for the yeast to generate free fatty acids from degradation of sebum and assimilate them as lipid sources for growth. Plays an essential role at the pathogen-host interface during disease progression. The polypeptide is Secreted mono- and diacylglycerol lipase LIP4 (Malassezia restricta (Seborrheic dermatitis infection agent)).